A 577-amino-acid polypeptide reads, in one-letter code: Probable HECT-type ubiquitin ligase-interacting protein creD (577 aa).

Disordered regions lie at residues 376 to 398 (LDPAGYRTPGPGSGPGTPFGTLS) and 428 to 566 (NLHA…EEER). 2 stretches are compositionally biased toward polar residues: residues 428–447 (NLHASRHSNPSPSESENQLE) and 460–472 (SSGSNTHSLTSPE). Positions 473-486 (LSRRPSDEVDHDHV) are enriched in basic and acidic residues. Residues 528–544 (SPQQAHVRSANRSSSYF) are compositionally biased toward polar residues.

The protein belongs to the arrestin family. Interacts with hulA.

Its function is as follows. Component of the regulatory network controlling carbon source utilization through ubiquitination and deubiquitination involving creA, creB, creC, creD and acrB. May be involved in signaling by recognizing appropriately phosphorylated substrates via its arrestin domains and then recruit a HECT-type ubiquitin ligase such as hulA, leading to ubiquitination of the substrate, providing a link between ubiquitination and phosphorylation in protein regulation and stability. The sequence is that of Probable HECT-type ubiquitin ligase-interacting protein creD (creD) from Aspergillus terreus (strain NIH 2624 / FGSC A1156).